The following is a 313-amino-acid chain: Aspartate carbamoyltransferase catalytic subunit (313 aa).

Residues arginine 54 and threonine 55 each contribute to the carbamoyl phosphate site. Lysine 82 contacts L-aspartate. Positions 104, 132, and 135 each coordinate carbamoyl phosphate. Arginine 165 and arginine 219 together coordinate L-aspartate. Carbamoyl phosphate-binding residues include glycine 260 and proline 261.

Belongs to the aspartate/ornithine carbamoyltransferase superfamily. ATCase family. Heterododecamer (2C3:3R2) of six catalytic PyrB chains organized as two trimers (C3), and six regulatory PyrI chains organized as three dimers (R2).

It carries out the reaction carbamoyl phosphate + L-aspartate = N-carbamoyl-L-aspartate + phosphate + H(+). Its pathway is pyrimidine metabolism; UMP biosynthesis via de novo pathway; (S)-dihydroorotate from bicarbonate: step 2/3. Its function is as follows. Catalyzes the condensation of carbamoyl phosphate and aspartate to form carbamoyl aspartate and inorganic phosphate, the committed step in the de novo pyrimidine nucleotide biosynthesis pathway. The protein is Aspartate carbamoyltransferase catalytic subunit of Thermobifida fusca (strain YX).